Here is a 259-residue protein sequence, read N- to C-terminus: Bacillaene synthase dehydratase PksH (259 aa).

Catalysis depends on residues aspartate 68 and glutamate 137.

This sequence belongs to the enoyl-CoA hydratase/isomerase family.

Its subcellular location is the cytoplasm. It participates in antibiotic biosynthesis; bacillaene biosynthesis. Involved in some intermediate steps for the synthesis of the antibiotic polyketide bacillaene which is involved in secondary metabolism. Catalyzes the dehydration of the (S)-3-hydroxy-3-methylglutaryl group tethered to PksL to a 3-methylglutaconyl moiety. The protein is Bacillaene synthase dehydratase PksH (pksH) of Bacillus subtilis (strain 168).